Here is a 345-residue protein sequence, read N- to C-terminus: Phosphoribosylformylglycinamidine cyclo-ligase (345 aa).

The protein belongs to the AIR synthase family.

The protein localises to the cytoplasm. It carries out the reaction 2-formamido-N(1)-(5-O-phospho-beta-D-ribosyl)acetamidine + ATP = 5-amino-1-(5-phospho-beta-D-ribosyl)imidazole + ADP + phosphate + H(+). The protein operates within purine metabolism; IMP biosynthesis via de novo pathway; 5-amino-1-(5-phospho-D-ribosyl)imidazole from N(2)-formyl-N(1)-(5-phospho-D-ribosyl)glycinamide: step 2/2. This chain is Phosphoribosylformylglycinamidine cyclo-ligase, found in Bifidobacterium longum (strain DJO10A).